Consider the following 258-residue polypeptide: UBX domain-containing protein 2A (258 aa).

The segment covering 1 to 14 (MKEVDNLDSIKEEW) has biased composition (basic and acidic residues). The tract at residues 1–30 (MKEVDNLDSIKEEWACETGPPDSQPLNDNQ) is disordered. The required for interaction with CHRNA3 stretch occupies residues 1 to 152 (MKEVDNLDSI…SATPRIVSKA (152 aa)). The segment at 1 to 165 (MKEVDNLDSI…EVDNKSTLSA (165 aa)) is required for inhibition of CHRNA3 ubiquitination and translocation of CHRNA3 to the plasma membrane resulting in an increase in acetylcholine-gated nicotinic acetylcholine receptor currents. Positions 61–125 (QVDVNIKLWK…VEDKKNEVCM (65 aa)) constitute an SEP domain. Positions 168–258 (LNNLEPITRI…QKTAEPFRKL (91 aa)) are required for interaction with VCP. Residues 170 to 247 (NLEPITRIQI…DLKNAVIIQR (78 aa)) form the UBX domain.

As to quaternary structure, part of a complex composed of STUB1/CHIP, VCP/p97, CHRNA3, and UBXN2A that modulates the ubiquitination and endoplasmic reticulum-associated degradation (ERAD) of CHRNA3. Within the complex UBXN2A acts as a scaffold protein required for the interaction of CHRNA3 with VCP/p97, this interaction also inhibits CHRNA3 ubiquitination by STUB1/CHIP and subsequently ERAD. Interacts (via SEP domain) with CHRNA3 and interacts (via UBX domain) with VCP/P97; these interactions are required for the interaction of CHRNA3 with the STUB1-VCP-UBXN2A complex. Interacts with HSPA9/MOT-2 (via SBD domain); the interaction inhibits HSPA9/MOT-2 interaction with and degradation of p53, thereby promotes p53 translocation to the nucleus. Interacts with RICTOR. Ubiquitinated. In terms of tissue distribution, expressed in the prefrontal cortex (at protein level). Expressed in the habenula and hippocampus (at protein level). Expressed in peripheral ganglia.

Its subcellular location is the golgi apparatus. It localises to the endoplasmic reticulum. The protein localises to the perikaryon. The protein resides in the cell projection. It is found in the dendrite. Its subcellular location is the nucleus. It localises to the cytoplasm. In terms of biological role, acts to repress the ubiquitination and subsequent endoplasmic reticulum-associated degradation of CHRNA3 by the STUB1-VCP-UBXN2A complex in cortical neurons. Also acts to promote the translocation of CHRNA3 to the plasma membrane and subsequently increases plasma membrane acetylcholine-gated ion-channel activation. Plays a role in the inhibition of STUB1-mediated TP53 degradation, via its interaction with HSPA9 which acts to inhibit TP53 binding to HSPA9. Positively mediates the ubiquitination and proteosomal degradation of RICTOR, may thereby act as a negative regulator of the mTORC2 pathway. This chain is UBX domain-containing protein 2A, found in Mus musculus (Mouse).